Here is an 81-residue protein sequence, read N- to C-terminus: Cytochrome b559 subunit alpha (81 aa).

Residues valine 21–tryptophan 35 traverse the membrane as a helical segment. Histidine 23 contributes to the heme binding site.

This sequence belongs to the PsbE/PsbF family. In terms of assembly, heterodimer of an alpha subunit and a beta subunit. PSII is composed of 1 copy each of membrane proteins PsbA, PsbB, PsbC, PsbD, PsbE, PsbF, PsbH, PsbI, PsbJ, PsbK, PsbL, PsbM, PsbT, PsbX, PsbY, PsbZ, Psb30/Ycf12, peripheral proteins PsbO, CyanoQ (PsbQ), PsbU, PsbV and a large number of cofactors. It forms dimeric complexes. It depends on heme b as a cofactor.

The protein localises to the cellular thylakoid membrane. Its function is as follows. This b-type cytochrome is tightly associated with the reaction center of photosystem II (PSII). PSII is a light-driven water:plastoquinone oxidoreductase that uses light energy to abstract electrons from H(2)O, generating O(2) and a proton gradient subsequently used for ATP formation. It consists of a core antenna complex that captures photons, and an electron transfer chain that converts photonic excitation into a charge separation. The chain is Cytochrome b559 subunit alpha from Crocosphaera subtropica (strain ATCC 51142 / BH68) (Cyanothece sp. (strain ATCC 51142)).